The primary structure comprises 325 residues: Isoaspartyl peptidase/L-asparaginase (325 aa).

Threonine 193 acts as the Nucleophile in catalysis. Substrate contacts are provided by residues 221–224 (RIGD) and 243–246 (TGKG).

Belongs to the Ntn-hydrolase family. As to quaternary structure, heterotetramer of two alpha and two beta chains arranged as a dimer of alpha/beta heterodimers. Post-translationally, cleaved into an alpha and beta chain by autocatalysis; this activates the enzyme. The N-terminal residue of the beta subunit is responsible for the nucleophile hydrolase activity. In terms of tissue distribution, developing seeds.

It carries out the reaction Cleavage of a beta-linked Asp residue from the N-terminus of a polypeptide.. Its function is as follows. Acts in asparagine catabolism but also in the final steps of protein degradation via hydrolysis of a range of isoaspartyl dipeptides. The sequence is that of Isoaspartyl peptidase/L-asparaginase from Lupinus angustifolius (Narrow-leaved blue lupine).